The following is a 126-amino-acid chain: Small ribosomal subunit protein eS24 (126 aa).

Residues 98–126 (LYTKPQTSRKQRKEKKNRLKKAGKKTAKK) form a disordered region. Residues 104 to 126 (TSRKQRKEKKNRLKKAGKKTAKK) are compositionally biased toward basic residues.

It belongs to the eukaryotic ribosomal protein eS24 family.

The sequence is that of Small ribosomal subunit protein eS24 (rps24) from Dictyostelium discoideum (Social amoeba).